Reading from the N-terminus, the 240-residue chain is Regulatory protein SdiA (240 aa).

An HTH luxR-type domain is found at 173 to 238; sequence VMTPEMNFSK…QVACYAAATG (66 aa). The H-T-H motif DNA-binding region spans 197–216; it reads SAEIAMILSISENTVNFHQK.

Functionally, activates cell division by specifically increasing transcription from one of the two promoters that lie immediately upstream of the ftsQAZ gene cluster. Activates ydiV expression in response to extracellular autoinducer AI-1 (Vibrio fischeri autoinducer oxoC6). This is Regulatory protein SdiA (sdiA) from Escherichia coli (strain K12).